Reading from the N-terminus, the 255-residue chain is Aliphatic sulfonates import ATP-binding protein SsuB (255 aa).

Residues 12 to 233 (LLLNAVSKHY…RLGSVRLAEL (222 aa)) enclose the ABC transporter domain. Residue 44 to 51 (GRSGGGKS) coordinates ATP.

Belongs to the ABC transporter superfamily. Aliphatic sulfonates importer (TC 3.A.1.17.2) family. As to quaternary structure, the complex is composed of two ATP-binding proteins (SsuB), two transmembrane proteins (SsuC) and a solute-binding protein (SsuA).

It is found in the cell inner membrane. It catalyses the reaction ATP + H2O + aliphatic sulfonate-[sulfonate-binding protein]Side 1 = ADP + phosphate + aliphatic sulfonateSide 2 + [sulfonate-binding protein]Side 1.. Functionally, part of the ABC transporter complex SsuABC involved in aliphatic sulfonates import. Responsible for energy coupling to the transport system. This is Aliphatic sulfonates import ATP-binding protein SsuB from Escherichia coli O6:K15:H31 (strain 536 / UPEC).